Reading from the N-terminus, the 1097-residue chain is MSSSALQVAKTATYLPDLVEVQRASFKWFLEQGLIEELQNFSPISDYTGKLELHFIGEEYRLKRPRHDVEEAKRRDATFASQMYVTCRLINKETGEIKEQEVFIGELPLMTERGTFIINGAERVIVNQIVRSPGVYFKDELDKNGRRTYNASVIPNRGAWLKFETDKNNLLYVRVDKTRKINAHVLMRAMGLSDNDVVDKLRHPEFYQSSIESANDEGINSEDQALLELYKKLRPGEPPSVSGGQQLLHSRFFDPKRYDLGRVGRYKINKKLRLTVPDDVRTLTHEDVLSTIDYLINLELDIGGASLDDIDHLGNRRVRSVGELLQNQVRVGLNRLERIIKERMTVGETDSLTPAQLVNPKPLVAAIKEFFGSSQLSQFMDQTNPLAELTHKRRISALGPGGLTRERAGFAVRDIHPSHYGRLCPIETPEGPNAGLINSLATHARVNEYGFIETPFWEVNNGKVDKEGNPVYLSADLEDECRVAPGDVATDKEGNIIANLIPVRYRQDFEKVPPHQVDYVQLSPVQVISVATSLIPFLEHDDANRALMGSNMQRQAVPLLRPERPLVGTGLESQVARDSGMVPITKVNGIVSYVDANEIVVKDDHGNEHFHYLQKYQRSNQDTCLNQRPIVKIGDRVISGQVLADGSACEGGEIALGQNVLIAYMPWEGYNYEDAILVSERMVTDDLYTSVHIEKYEIEARQTKLGPEEITREIPNISEESLNNLDEMGIIRIGAFVESGDILVGKVTPKGESDQPPEEKLLRAIFGEKARDVRDNSLRVPKTEKGRVLDVRIYTREQGDELPPGANMVVRVYVAQRRKIQVGDKMAGRHGNKGIISRILPREDMPYLPDGTPVDIVLNPLGVPSRMNVGQVFELLMGWAASNLNCRVKVVPFDEMYGAEKSHQTVQAFLEEASKQPGKAWVYNPDDPGKLLLKDGRTGEPFDQPVAVGYSHFLKLVHLVDDKIHARSTGPYSLVTQQPLGGKAQQGGQRLGEMEVWALEAYGAAYTLQELLTVKSDDMQGRNEALNAIVKGKPIPRPGTPESFKVLMRELQSLGLDIGVYTDEGKEVDLMQDINPRRNTPSRPTYESLGTSEYEED.

The disordered stretch occupies residues glutamine 1072–aspartate 1097. Over residues arginine 1077–threonine 1091 the composition is skewed to polar residues.

Belongs to the RNA polymerase beta chain family. In cyanobacteria the RNAP catalytic core is composed of 2 alpha, 1 beta, 1 beta', 1 gamma and 1 omega subunit. When a sigma factor is associated with the core the holoenzyme is formed, which can initiate transcription.

The catalysed reaction is RNA(n) + a ribonucleoside 5'-triphosphate = RNA(n+1) + diphosphate. In terms of biological role, DNA-dependent RNA polymerase catalyzes the transcription of DNA into RNA using the four ribonucleoside triphosphates as substrates. This Prochlorococcus marinus (strain MIT 9215) protein is DNA-directed RNA polymerase subunit beta.